The sequence spans 492 residues: N-succinylglutamate 5-semialdehyde dehydrogenase (492 aa).

220-225 (GSASTG) contacts NAD(+). Catalysis depends on residues Glu-243 and Cys-277.

This sequence belongs to the aldehyde dehydrogenase family. AstD subfamily.

It carries out the reaction N-succinyl-L-glutamate 5-semialdehyde + NAD(+) + H2O = N-succinyl-L-glutamate + NADH + 2 H(+). The protein operates within amino-acid degradation; L-arginine degradation via AST pathway; L-glutamate and succinate from L-arginine: step 4/5. In terms of biological role, catalyzes the NAD-dependent reduction of succinylglutamate semialdehyde into succinylglutamate. The sequence is that of N-succinylglutamate 5-semialdehyde dehydrogenase from Salmonella paratyphi C (strain RKS4594).